A 404-amino-acid chain; its full sequence is High affinity immunoglobulin gamma Fc receptor I (404 aa).

Positions 1–24 are cleaved as a signal peptide; it reads MILTSFGDDMWLLTTLLLWVPVGG. Topologically, residues 25–297 are extracellular; it reads EVVNATKAVI…QVLGPQSSAP (273 aa). N28, N48, N69, N168, and N249 each carry an N-linked (GlcNAc...) asparagine glycan. 3 consecutive Ig-like C2-type domains span residues 32 to 111, 117 to 194, and 201 to 286; these read AVIT…LQIH, LQAS…SITV, and PVLR…PELE. 3 cysteine pairs are disulfide-bonded: C53–C95, C134–C177, and C221–C269. The helical transmembrane segment at 298 to 320 threads the bilayer; sequence VWFHILFYLSVGIMFSLNTVLYV. Positions 321-342 are interaction with EPB41L2; the sequence is KIHRLQREKKYNLEVPLVSEQG. Residues 321-404 are Cytoplasmic-facing; it reads KIHRLQREKK…DSTGAQTSQS (84 aa). Residues 346–404 are disordered; the sequence is NSFQQVRSDGVYEEVTATASQTTPKEAPDGPRSSVGDCGPEQPEPLPPSDSTGAQTSQS. At S347 the chain carries Phosphoserine. The residue at position 368 (T368) is a Phosphothreonine. The segment covering 394 to 404 has biased composition (polar residues); it reads SDSTGAQTSQS.

Belongs to the immunoglobulin superfamily. FCGR1 family. In terms of assembly, interacts with FCERG1; forms a functional signaling complex. Interacts with FLNA; prevents FCGR1A degradation. Interacts with EPB41L2, LAT and PPL. Interacts with HCK and LYN. In terms of processing, N-glycosylated. Post-translationally, phosphorylated on serine residues. As to expression, macrophage-specific.

It localises to the cell membrane. High affinity receptor for the Fc region of immunoglobulins gamma. Functions in both innate and adaptive immune responses. This Mus musculus (Mouse) protein is High affinity immunoglobulin gamma Fc receptor I (Fcgr1).